The chain runs to 342 residues: MRNILLKIYDSKFLNQEESYQLFTLISSGKITDIKLASILTAMKIRGESIEEITGAIKAFLDKMKYFPKPDYIFSDIVGTGGDAKNTINISTMSAFVAATCGLKIIKHCNQRISSKSGSSDILEKFNINLNASPEKSRKTLDQLNICFLFAPKYHDGFKYSNNVRTDLKTKTIFNFLGPFLNPATPPLSVIGVYNKNLINIAVNILKNLQYKRAIVLHSDNTDEVTLYGTTYVSELLNKKIISYQLQPESFGLKMHPKKILKINSLEENYHIIKEIMKGKGSKLYEELIAVNVAMLLKVFGYENLKENTKLALNKIRSGDVYKHIRNVANMLKEDNHARHNT.

5-phospho-alpha-D-ribose 1-diphosphate-binding positions include Gly-79, 82 to 83, Thr-87, 89 to 92, 107 to 115, and Ser-119; these read GD, NIST, and KHCNQRISS. Gly-79 contacts anthranilate. Ser-91 provides a ligand contact to Mg(2+). Asn-110 provides a ligand contact to anthranilate. Arg-165 contributes to the anthranilate binding site. Residues Asp-223 and Glu-224 each coordinate Mg(2+).

It belongs to the anthranilate phosphoribosyltransferase family. Homodimer. Requires Mg(2+) as cofactor.

It catalyses the reaction N-(5-phospho-beta-D-ribosyl)anthranilate + diphosphate = 5-phospho-alpha-D-ribose 1-diphosphate + anthranilate. It participates in amino-acid biosynthesis; L-tryptophan biosynthesis; L-tryptophan from chorismate: step 2/5. Its function is as follows. Catalyzes the transfer of the phosphoribosyl group of 5-phosphorylribose-1-pyrophosphate (PRPP) to anthranilate to yield N-(5'-phosphoribosyl)-anthranilate (PRA). This Buchnera aphidicola subsp. Acyrthosiphon pisum (strain 5A) protein is Anthranilate phosphoribosyltransferase.